Consider the following 406-residue polypeptide: Peptidase T (406 aa).

His82 contacts Zn(2+). Residue Asp84 is part of the active site. Asp142 is a Zn(2+) binding site. Glu176 functions as the Proton acceptor in the catalytic mechanism. Positions 177, 199, and 381 each coordinate Zn(2+).

It belongs to the peptidase M20B family. It depends on Zn(2+) as a cofactor.

The protein resides in the cytoplasm. It carries out the reaction Release of the N-terminal residue from a tripeptide.. Cleaves the N-terminal amino acid of tripeptides. The polypeptide is Peptidase T (Streptococcus agalactiae serotype Ia (strain ATCC 27591 / A909 / CDC SS700)).